The chain runs to 109 residues: Spermidine export protein MdtI (109 aa).

4 consecutive transmembrane segments (helical) span residues tryptophan 6–leucine 26, valine 36–valine 56, alanine 64–phenylalanine 84, and leucine 88–leucine 108.

The protein belongs to the drug/metabolite transporter (DMT) superfamily. Small multidrug resistance (SMR) (TC 2.A.7.1) family. MdtI subfamily. Forms a complex with MdtJ.

It localises to the cell inner membrane. Functionally, catalyzes the excretion of spermidine. The polypeptide is Spermidine export protein MdtI (Klebsiella pneumoniae (strain 342)).